Consider the following 390-residue polypeptide: GTPase Obg (390 aa).

Residues 1–159 enclose the Obg domain; it reads MKFVDEASIL…RDLLLELMLL (159 aa). Residues 127–147 form a disordered region; sequence NTRFKSSVNRTPRQKTNGTPG. Over residues 129–145 the composition is skewed to polar residues; that stretch reads RFKSSVNRTPRQKTNGT. Residues 160–333 form the OBG-type G domain; that stretch reads ADVGMLGMPN…LCWDVMTFII (174 aa). Residues 166-173, 191-195, 213-216, 283-286, and 314-316 contribute to the GTP site; these read GMPNAGKS, FTTLV, DIPG, NKID, and SAA. Mg(2+) is bound by residues S173 and T193.

It belongs to the TRAFAC class OBG-HflX-like GTPase superfamily. OBG GTPase family. In terms of assembly, monomer. Mg(2+) is required as a cofactor.

Its subcellular location is the cytoplasm. In terms of biological role, an essential GTPase which binds GTP, GDP and possibly (p)ppGpp with moderate affinity, with high nucleotide exchange rates and a fairly low GTP hydrolysis rate. Plays a role in control of the cell cycle, stress response, ribosome biogenesis and in those bacteria that undergo differentiation, in morphogenesis control. This Salmonella gallinarum (strain 287/91 / NCTC 13346) protein is GTPase Obg.